A 185-amino-acid chain; its full sequence is Ribosome-recycling factor (185 aa).

This sequence belongs to the RRF family.

The protein localises to the cytoplasm. Its function is as follows. Responsible for the release of ribosomes from messenger RNA at the termination of protein biosynthesis. May increase the efficiency of translation by recycling ribosomes from one round of translation to another. The protein is Ribosome-recycling factor of Clostridium beijerinckii (strain ATCC 51743 / NCIMB 8052) (Clostridium acetobutylicum).